A 687-amino-acid polypeptide reads, in one-letter code: Glycine--tRNA ligase beta subunit (687 aa).

This sequence belongs to the class-II aminoacyl-tRNA synthetase family. As to quaternary structure, tetramer of two alpha and two beta subunits.

The protein localises to the cytoplasm. The enzyme catalyses tRNA(Gly) + glycine + ATP = glycyl-tRNA(Gly) + AMP + diphosphate. This chain is Glycine--tRNA ligase beta subunit, found in Neisseria gonorrhoeae (strain ATCC 700825 / FA 1090).